Reading from the N-terminus, the 194-residue chain is NADH-quinone oxidoreductase subunit B (194 aa).

The span at 1 to 11 (MGMSQNNSTLV) shows a compositional bias: polar residues. The tract at residues 1–22 (MGMSQNNSTLVAPQPKGIIDPA) is disordered. [4Fe-4S] cluster contacts are provided by C72, C73, C138, and C168.

This sequence belongs to the complex I 20 kDa subunit family. In terms of assembly, NDH-1 is composed of 14 different subunits. Subunits NuoB, C, D, E, F, and G constitute the peripheral sector of the complex. The cofactor is [4Fe-4S] cluster.

It localises to the cell inner membrane. The enzyme catalyses a quinone + NADH + 5 H(+)(in) = a quinol + NAD(+) + 4 H(+)(out). Its function is as follows. NDH-1 shuttles electrons from NADH, via FMN and iron-sulfur (Fe-S) centers, to quinones in the respiratory chain. The immediate electron acceptor for the enzyme in this species is believed to be ubiquinone. Couples the redox reaction to proton translocation (for every two electrons transferred, four hydrogen ions are translocated across the cytoplasmic membrane), and thus conserves the redox energy in a proton gradient. The sequence is that of NADH-quinone oxidoreductase subunit B from Agrobacterium fabrum (strain C58 / ATCC 33970) (Agrobacterium tumefaciens (strain C58)).